Reading from the N-terminus, the 179-residue chain is Large ribosomal subunit protein uL5 (179 aa).

The protein belongs to the universal ribosomal protein uL5 family. In terms of assembly, part of the 50S ribosomal subunit; part of the 5S rRNA/L5/L18/L25 subcomplex. Contacts the 5S rRNA and the P site tRNA. Forms a bridge to the 30S subunit in the 70S ribosome.

Functionally, this is one of the proteins that bind and probably mediate the attachment of the 5S RNA into the large ribosomal subunit, where it forms part of the central protuberance. In the 70S ribosome it contacts protein S13 of the 30S subunit (bridge B1b), connecting the 2 subunits; this bridge is implicated in subunit movement. Contacts the P site tRNA; the 5S rRNA and some of its associated proteins might help stabilize positioning of ribosome-bound tRNAs. In Marinobacter nauticus (strain ATCC 700491 / DSM 11845 / VT8) (Marinobacter aquaeolei), this protein is Large ribosomal subunit protein uL5.